A 415-amino-acid chain; its full sequence is Arginine biosynthesis bifunctional protein ArgJ (415 aa).

The substrate site is built by threonine 156, lysine 182, threonine 193, glutamate 279, asparagine 410, and threonine 415. The active-site Nucleophile is the threonine 193.

It belongs to the ArgJ family. Heterotetramer of two alpha and two beta chains.

It localises to the cytoplasm. It carries out the reaction N(2)-acetyl-L-ornithine + L-glutamate = N-acetyl-L-glutamate + L-ornithine. The catalysed reaction is L-glutamate + acetyl-CoA = N-acetyl-L-glutamate + CoA + H(+). The protein operates within amino-acid biosynthesis; L-arginine biosynthesis; L-ornithine and N-acetyl-L-glutamate from L-glutamate and N(2)-acetyl-L-ornithine (cyclic): step 1/1. Its pathway is amino-acid biosynthesis; L-arginine biosynthesis; N(2)-acetyl-L-ornithine from L-glutamate: step 1/4. In terms of biological role, catalyzes two activities which are involved in the cyclic version of arginine biosynthesis: the synthesis of N-acetylglutamate from glutamate and acetyl-CoA as the acetyl donor, and of ornithine by transacetylation between N(2)-acetylornithine and glutamate. The protein is Arginine biosynthesis bifunctional protein ArgJ of Synechococcus sp. (strain ATCC 27144 / PCC 6301 / SAUG 1402/1) (Anacystis nidulans).